A 304-amino-acid chain; its full sequence is Non-specific ribonucleoside hydrolase RihC (304 aa).

The active site involves H233.

The protein belongs to the IUNH family. RihC subfamily.

Hydrolyzes both purine and pyrimidine ribonucleosides with a broad-substrate specificity. This is Non-specific ribonucleoside hydrolase RihC from Escherichia coli (strain SMS-3-5 / SECEC).